The sequence spans 251 residues: 2,3-bisphosphoglycerate-dependent phosphoglycerate mutase (251 aa).

Residues 8–15 (RHGESLWN), 21–22 (TG), R60, 87–90 (ERHY), K98, 114–115 (RR), and 183–184 (GN) contribute to the substrate site. Catalysis depends on H9, which acts as the Tele-phosphohistidine intermediate. The active-site Proton donor/acceptor is the E87.

This sequence belongs to the phosphoglycerate mutase family. BPG-dependent PGAM subfamily.

It catalyses the reaction (2R)-2-phosphoglycerate = (2R)-3-phosphoglycerate. The protein operates within carbohydrate degradation; glycolysis; pyruvate from D-glyceraldehyde 3-phosphate: step 3/5. Functionally, catalyzes the interconversion of 2-phosphoglycerate and 3-phosphoglycerate. The protein is 2,3-bisphosphoglycerate-dependent phosphoglycerate mutase of Thermoanaerobacter pseudethanolicus (strain ATCC 33223 / 39E) (Clostridium thermohydrosulfuricum).